Reading from the N-terminus, the 646-residue chain is GHASQVLVRKRRANSMLEETKKGNLERECIEELCNKEEAREVFENDPETDYFYPKYLGCLGSFRAKLFTATRRSANGYPDLRSCVNAIPDQCNPLPCSEEGYLNCKDGQATFTCICKPGWQGEKCEIDINECKDPTNINGGCSQICDNTAGSYHCSCKSGFVMLANEKDCKDMDECSVKPSVCGTAVCKNTPGDFECECSEGYRYNPTAKSCEDIDECSENMCAQLCVNYPGGYSCYCDGKKGFKLAQDKKSCEAVPVCLPLDLDKNYQLLYLAEQFVGAVLYLKFHLPEITRFSAEFDFRTYDSEGVILYAESLDHSTWFLIALRQGKIEIQFKNDYAAQITTGGQVINDGLWNMVSVEELEHSVSIKIAQEPVMNINKPGSLFKPTNGFLETKVYFAGLPRKVENALIRPINPRLDGCMRGWNLMKQGASGVKEIIQQKQKKHCLVTVEKGSYYPGSGIAQFHIDYNNLSYVEDWQVNVTLNIRPSTGTGVMLTLVSGNTLPFALSLVQSTSETSQDILVSVENRVIYQLESISLCSGQQSQLEFSVSRNHLELSTPLVKDVIYSEDLQRHLAVLDEAMKGTVTTYLGGLPEVPFNATPVNAFYNGCMEVNINGVQLDLDEAISKHNDIRAHSCPSVWNDKTNS.

A propeptide spanning residues glycine 1–arginine 12 is cleaved from the precursor. Positions alanine 13–glycine 58 constitute a Gla domain. 11 positions are modified to 4-carboxyglutamate: glutamate 18, glutamate 19, glutamate 26, glutamate 28, glutamate 31, glutamate 32, glutamate 37, glutamate 38, glutamate 41, glutamate 44, and glutamate 48. Cysteine 29 and cysteine 34 are disulfide-bonded. Residues cysteine 59–alanine 87 are thrombin-sensitive. The region spanning isoleucine 88–glutamate 126 is the EGF-like 1 domain. Disulfide bonds link cysteine 92–cysteine 105, cysteine 97–cysteine 114, cysteine 116–cysteine 125, cysteine 132–cysteine 146, cysteine 142–cysteine 155, cysteine 157–cysteine 170, cysteine 176–cysteine 188, cysteine 183–cysteine 197, cysteine 199–cysteine 212, cysteine 218–cysteine 227, cysteine 223–cysteine 236, cysteine 238–cysteine 253, and cysteine 420–cysteine 446. Residue aspartate 107 is modified to (3R)-3-hydroxyaspartate. In terms of domain architecture, EGF-like 2; calcium-binding spans aspartate 128 to lysine 171. One can recognise an EGF-like 3; calcium-binding domain in the interval aspartate 172–glutamate 213. The EGF-like 4; calcium-binding domain occupies aspartate 214–glutamate 254. 2 consecutive Laminin G-like domains span residues leucine 270–cysteine 446 and tyrosine 455–cysteine 636. 2 N-linked (GlcNAc...) asparagine glycosylation sites follow: asparagine 470 and asparagine 480. Cysteine 609 and cysteine 636 form a disulfide bridge.

In terms of assembly, interacts with C4b-binding protein, a regulator of the complex system. In rabbit plasma however, protein S appears to be present only in free form. The iron and 2-oxoglutarate dependent 3-hydroxylation of aspartate and asparagine is (R) stereospecific within EGF domains. Plasma.

Its subcellular location is the secreted. In terms of biological role, anticoagulant plasma protein; it is a cofactor to activated protein C in the degradation of coagulation factors Va and VIIIa. It helps to prevent coagulation and stimulating fibrinolysis. This chain is Vitamin K-dependent protein S (PROS1), found in Oryctolagus cuniculus (Rabbit).